Consider the following 72-residue polypeptide: Alpha-elapitoxin-Dpp2a (72 aa).

Intrachain disulfides connect Cys3–Cys21, Cys14–Cys42, Cys27–Cys31, Cys46–Cys57, and Cys58–Cys63.

Belongs to the three-finger toxin family. Long-chain subfamily. Type II alpha-neurotoxin sub-subfamily. Expressed by the venom gland.

The protein resides in the secreted. Functionally, binds with high affinity to muscular (alpha-1/CHRNA1) and neuronal (alpha-7/CHRNA7) nicotinic acetylcholine receptor (nAChR) and inhibits acetylcholine from binding to the receptor, thereby impairing neuromuscular and neuronal transmission. The polypeptide is Alpha-elapitoxin-Dpp2a (Dendroaspis polylepis polylepis (Black mamba)).